The sequence spans 431 residues: Leucine carboxyl methyltransferase 1 (431 aa).

Residues arginine 103, glycine 131, aspartate 159, and 219–220 each bind S-adenosyl-L-methionine; that span reads DL. The tract at residues 228–268 is disordered; sequence QPQQPLPPGVPIGSRGLHASPFTPGSTTQHEEQTEETSLPQ. Glutamate 289 serves as a coordination point for S-adenosyl-L-methionine.

It belongs to the methyltransferase superfamily. LCMT family.

The enzyme catalyses [phosphatase 2A protein]-C-terminal L-leucine + S-adenosyl-L-methionine = [phosphatase 2A protein]-C-terminal L-leucine methyl ester + S-adenosyl-L-homocysteine. In terms of biological role, methylates the carboxyl group of the C-terminal leucine residue of protein phosphatase 2A catalytic subunits to form alpha-leucine ester residues. In Neurospora crassa (strain ATCC 24698 / 74-OR23-1A / CBS 708.71 / DSM 1257 / FGSC 987), this protein is Leucine carboxyl methyltransferase 1 (ppm-1).